Reading from the N-terminus, the 193-residue chain is Penicillin-binding protein activator LpoB (193 aa).

The signal sequence occupies residues 1-16 (MKKYLGVILAALVLTG). Residue Cys17 is the site of N-palmitoyl cysteine attachment. Cys17 is lipidated: S-diacylglycerol cysteine. Residues 17-55 (CPSRPPEPTEPPATIEPVEPQVPTTPTLPPGESVPQPPK) form a disordered region. The segment covering 28 to 41 (PATIEPVEPQVPTT) has biased composition (low complexity).

Belongs to the LpoB family. As to quaternary structure, interacts with PBP1b.

The protein resides in the cell outer membrane. Its function is as follows. Regulator of peptidoglycan synthesis that is essential for the function of penicillin-binding protein 1B (PBP1b). The protein is Penicillin-binding protein activator LpoB of Pectobacterium carotovorum subsp. carotovorum (strain PC1).